An 815-amino-acid chain; its full sequence is SNF1 protein kinase subunit beta-1 (815 aa).

A compositionally biased stretch (polar residues) spans 1 to 11 (MGNSPSTQDPS). Disordered stretches follow at residues 1 to 88 (MGNS…TIDK) and 117 to 148 (SDDH…KQTK). Gly2 carries the N-myristoyl glycine lipid modification. The span at 12-31 (HSTKKEHGHHFHDAFNKDRQ) shows a compositional bias: basic and acidic residues. Polar residues predominate over residues 32-42 (GSITSQLFNNR). A Phosphoserine modification is found at Ser33. Basic and acidic residues-rich tracts occupy residues 72–88 (PSTD…TIDK) and 117–129 (SDDH…EEQV). Phosphoserine is present on residues Ser181, Ser198, Ser200, Ser206, Ser209, and Ser220. 3 disordered regions span residues 310–335 (SHAN…NDDF), 363–389 (HQNK…FASL), and 410–444 (PLHP…SSIS). A compositionally biased stretch (low complexity) spans 313–326 (NNNGNIENNTRNKG). Position 331 is a phosphoserine (Ser331). The span at 363 to 376 (HQNKTKKAQNKKIR) shows a compositional bias: basic residues. Low complexity-rich tracts occupy residues 377-389 (SASN…FASL) and 433-444 (HSNSMSSMSSIS). Residues 473-716 (VSTDIASALK…LQQGGNIDAE (244 aa)) form a kinase-interacting sequence (KIS); required for interaction with SNF1 region. Phosphoserine occurs at positions 494 and 497. The segment at 583 to 616 (TLDEELPKRPELKRFPSSSRKSSYYSAKGVERPS) is disordered. A compositionally biased stretch (basic and acidic residues) spans 587–596 (ELPKRPELKR). Positions 599–608 (SSSRKSSYYS) are enriched in low complexity. Ser643 is modified (phosphoserine). Residues 724–804 (SRYPVPDLPI…FITQVVYAPC (81 aa)) are association with SNF1 kinase complex (ASC) domain; required for interaction with SNF4.

Belongs to the 5'-AMP-activated protein kinase beta subunit family. As to quaternary structure, component of the SNF1 kinase complex, a heterotrimeric complex composed of the catalytic alpha subunit SNF1, one of the three related beta subunits SIP1, SIP2 or GAL83, and the regulatory gamma subunit SNF4. The beta subunit serves as a bridge between the catalytic and the regulatory subunit. Interacts (via KIS domain) with SNF1. Interacts (via ASC domain) with SNF4. Post-translationally, phosphorylated by SNF1 in vitro.

The protein localises to the cytoplasm. It localises to the vacuole membrane. Functionally, beta subunit of the SNF1 kinase complex, which is required for transcriptional, metabolic, and developmental adaptations in response to glucose limitation. Has a structural role, mediating heterotrimer formation, and a regulatory role, defining carbon source-regulated subcellular location and substrate specificity of the SNF1 kinase complex. Promotes the PKA-regulated relocalization of the SNF1 kinase complex to the vacuolar membrane in response to various types of carbon stress. In Saccharomyces cerevisiae (strain YJM789) (Baker's yeast), this protein is SNF1 protein kinase subunit beta-1 (SIP1).